The chain runs to 513 residues: Cytochrome P450 71D445 (513 aa).

A helical; Signal-anchor for type II membrane protein membrane pass occupies residues 12-28; that stretch reads SEWAITSTITLLFLILL. Residue cysteine 450 participates in heme binding.

It belongs to the cytochrome P450 family. Heme serves as cofactor. As to expression, expressed in mature seeds.

It localises to the membrane. The enzyme catalyses (-)-casbene + reduced [NADPH--hemoprotein reductase] + O2 = 8-hydroxycasbene + oxidized [NADPH--hemoprotein reductase] + H2O + H(+). It carries out the reaction 4-hydroxycasbene + reduced [NADPH--hemoprotein reductase] + O2 = 4,8-dihydroxycasbene + oxidized [NADPH--hemoprotein reductase] + H2O + H(+). The catalysed reaction is 4,8-dihydroxycasbene + reduced [NADPH--hemoprotein reductase] + O2 = 4,5,8-trihydroxycasbene + oxidized [NADPH--hemoprotein reductase] + H2O + H(+). It functions in the pathway secondary metabolite biosynthesis; terpenoid biosynthesis. Its function is as follows. Involved in the biosynthesis of macrocyclic lathyrane type diterpenoids (also called Euphorbia factors) natural products, including the cyclization route from casbene to jolkinol C, a precursor for ingenol mebutate that is used to treat actinic keratosis, a precancerous skin condition. Catalyzes the hydroxylation of (-)-casbene and 4-hydroxycasbene to produce 8-hydroxycasbene and 4,8-dihydroxycasbene, respectively. Also mediates the formation of 4-hydroxy-8-ketocasbene from 4,8-dihydroxycasbene. Together with ADH1, triggers the biosynthesis of 8-ketocasbene from 8-hydroxycasbene. This Euphorbia lathyris (Caper spurge) protein is Cytochrome P450 71D445.